The sequence spans 636 residues: LEAF RUST 10 DISEASE-RESISTANCE LOCUS RECEPTOR-LIKE PROTEIN KINASE-like 1.5 (636 aa).

The N-terminal stretch at 1–26 (MSQPPWRCFSLLIFVLTIFSTKPSSA) is a signal peptide. Residues 27-257 (STSCSSSFHC…NNKRVNHIAV (231 aa)) are Extracellular-facing. N-linked (GlcNAc...) asparagine glycans are attached at residues asparagine 73, asparagine 102, asparagine 146, and asparagine 224. The helical transmembrane segment at 258–278 (LSLIFALTCLLLVFSVAVAIF) threads the bilayer. At 279–636 (RSRRASFLSS…RVADDDVAKN (358 aa)) the chain is on the cytoplasmic side. The Protein kinase domain maps to 324–628 (FDPKRKIGDG…LRRIRSHTRV (305 aa)). ATP-binding positions include 330 to 338 (IGDGGFGSV) and lysine 352. The active-site Proton acceptor is the aspartate 458.

Belongs to the protein kinase superfamily. Ser/Thr protein kinase family.

Its subcellular location is the cell membrane. The enzyme catalyses L-seryl-[protein] + ATP = O-phospho-L-seryl-[protein] + ADP + H(+). The catalysed reaction is L-threonyl-[protein] + ATP = O-phospho-L-threonyl-[protein] + ADP + H(+). This Arabidopsis thaliana (Mouse-ear cress) protein is LEAF RUST 10 DISEASE-RESISTANCE LOCUS RECEPTOR-LIKE PROTEIN KINASE-like 1.5.